Consider the following 447-residue polypeptide: Tubulin beta-5 chain (447 aa).

GTP is bound by residues Gln11, Glu69, Ser138, Gly142, Thr143, Gly144, Asn204, and Asn226. Glu69 lines the Mg(2+) pocket. The segment at Gln424 to Gly447 is disordered. The segment covering Thr429–Gly447 has biased composition (acidic residues).

The protein belongs to the tubulin family. Dimer of alpha and beta chains. A typical microtubule is a hollow water-filled tube with an outer diameter of 25 nm and an inner diameter of 15 nM. Alpha-beta heterodimers associate head-to-tail to form protofilaments running lengthwise along the microtubule wall with the beta-tubulin subunit facing the microtubule plus end conferring a structural polarity. Microtubules usually have 13 protofilaments but different protofilament numbers can be found in some organisms and specialized cells. Mg(2+) is required as a cofactor.

It localises to the cytoplasm. The protein resides in the cytoskeleton. In terms of biological role, tubulin is the major constituent of microtubules, a cylinder consisting of laterally associated linear protofilaments composed of alpha- and beta-tubulin heterodimers. Microtubules grow by the addition of GTP-tubulin dimers to the microtubule end, where a stabilizing cap forms. Below the cap, tubulin dimers are in GDP-bound state, owing to GTPase activity of alpha-tubulin. The chain is Tubulin beta-5 chain (TUBB5) from Ectocarpus variabilis (Brown alga).